Consider the following 103-residue polypeptide: MQNQKIRIRLKAFDYRLIDQSAAEIVDTAKRTGAVVKGPVPLPTRIERFDILRSPHVNKTSRDQLEIRTHLRLMDIVDPTEKTVDALMKLDLPAGVGVEIKLQ.

Belongs to the universal ribosomal protein uS10 family. As to quaternary structure, part of the 30S ribosomal subunit.

Involved in the binding of tRNA to the ribosomes. The chain is Small ribosomal subunit protein uS10 from Polynucleobacter necessarius subsp. necessarius (strain STIR1).